The primary structure comprises 298 residues: Aspartate carbamoyltransferase catalytic subunit (298 aa).

Carbamoyl phosphate is bound by residues Arg-50 and Thr-51. Lys-79 contributes to the L-aspartate binding site. The carbamoyl phosphate site is built by Arg-100, His-128, and Gln-131. L-aspartate contacts are provided by Arg-160 and Arg-221. Positions 260 and 261 each coordinate carbamoyl phosphate.

It belongs to the aspartate/ornithine carbamoyltransferase superfamily. ATCase family. As to quaternary structure, heterooligomer of catalytic and regulatory chains.

The catalysed reaction is carbamoyl phosphate + L-aspartate = N-carbamoyl-L-aspartate + phosphate + H(+). The protein operates within pyrimidine metabolism; UMP biosynthesis via de novo pathway; (S)-dihydroorotate from bicarbonate: step 2/3. Its function is as follows. Catalyzes the condensation of carbamoyl phosphate and aspartate to form carbamoyl aspartate and inorganic phosphate, the committed step in the de novo pyrimidine nucleotide biosynthesis pathway. The sequence is that of Aspartate carbamoyltransferase catalytic subunit from Methanosphaerula palustris (strain ATCC BAA-1556 / DSM 19958 / E1-9c).